The following is a 28-amino-acid chain: Conotoxin de7b (28 aa).

3 disulfide bridges follow: C2–C18, C9–C22, and C17–C27. P4 bears the 4-hydroxyproline; partial mark. 4-carboxyglutamate; partial is present on E7. Position 14 is a 4-hydroxyproline; partial (P14).

As to expression, expressed by the venom duct.

It is found in the secreted. May inhibit sodium (Nav) or calcium channels (Cav). The protein is Conotoxin de7b of Conasprella delessertii (Sozon's cone).